The sequence spans 339 residues: Deubiquitinase and deneddylase Dub2 (339 aa).

A helical membrane pass occupies residues Ile-36 to Phe-56. Active-site residues include His-203, Asp-220, and Cys-282.

The protein belongs to the peptidase C48 family.

It is found in the secreted. The protein resides in the host cell. It localises to the membrane. Its function is as follows. Effector proteins function to alter host cell physiology and promote bacterial survival in host tissues. This protease possesses deubiquitinating and deneddylating activities. This is Deubiquitinase and deneddylase Dub2 (cdu2) from Chlamydia trachomatis serovar L2 (strain ATCC VR-902B / DSM 19102 / 434/Bu).